The chain runs to 391 residues: NADH-quinone oxidoreductase subunit D (391 aa).

It belongs to the complex I 49 kDa subunit family. In terms of assembly, NDH-1 is composed of 14 different subunits. Subunits NuoB, C, D, E, F, and G constitute the peripheral sector of the complex.

It localises to the cell inner membrane. It catalyses the reaction a quinone + NADH + 5 H(+)(in) = a quinol + NAD(+) + 4 H(+)(out). Its function is as follows. NDH-1 shuttles electrons from NADH, via FMN and iron-sulfur (Fe-S) centers, to quinones in the respiratory chain. The immediate electron acceptor for the enzyme in this species is believed to be ubiquinone. Couples the redox reaction to proton translocation (for every two electrons transferred, four hydrogen ions are translocated across the cytoplasmic membrane), and thus conserves the redox energy in a proton gradient. This Pelagibacter ubique (strain HTCC1062) protein is NADH-quinone oxidoreductase subunit D.